A 391-amino-acid chain; its full sequence is Cathepsin E (391 aa).

An N-terminal signal peptide occupies residues 1–19 (MKTFLLLLLVLLELGQAPG). Positions 20–53 (ALHRVPLSRRESLRKKLRAQGQLTELWKSQNLNM) are cleaved as a propeptide — activation peptide. The Peptidase A1 domain maps to 74–387 (YFGTISIGSP…DRGNNRVGLA (314 aa)). N-linked (GlcNAc...) asparagine glycosylation is present at asparagine 86. The active site involves aspartate 92. 2 cysteine pairs are disulfide-bonded: cysteine 105-cysteine 110 and cysteine 267-cysteine 271. Residue aspartate 276 is part of the active site. Residues cysteine 309 and cysteine 346 are joined by a disulfide bond.

It belongs to the peptidase A1 family. Homodimer; disulfide-linked. Glycosylated. The nature of the carbohydrate chain varies between cell types. Expressed abundantly in the surface and foveolar epithelial cells of the fundic and pyloric stomach mucosa, and at very low levels in the spleen.

The protein localises to the endosome. The enzyme catalyses Similar to cathepsin D, but slightly broader specificity.. Functionally, may have a role in immune function. Probably involved in the processing of antigenic peptides during MHC class II-mediated antigen presentation. May play a role in activation-induced lymphocyte depletion in the thymus, and in neuronal degeneration and glial cell activation in the brain. The protein is Cathepsin E (CTSE) of Cavia porcellus (Guinea pig).